We begin with the raw amino-acid sequence, 117 residues long: Ig heavy chain V region MOO (117 aa).

The 116-residue stretch at 1-116 (EVKLVESGGD…FGQGTIVTVS (116 aa)) folds into the Ig-like domain.

The sequence is that of Ig heavy chain V region MOO from Canis lupus familiaris (Dog).